The primary structure comprises 195 residues: Cytochrome c oxidase assembly protein CtaG (195 aa).

Residues 1–7 (MSGGKPR) lie on the Cytoplasmic side of the membrane. Residues 8–30 (SNTRTVAMLAGVVVLMGALSWAA) form a helical; Signal-anchor for type II membrane protein membrane-spanning segment. Topologically, residues 31–195 (VPFYSWFCKV…LDAKTEPTVN (165 aa)) are periplasmic.

It belongs to the COX11/CtaG family.

Its subcellular location is the cell inner membrane. In terms of biological role, exerts its effect at some terminal stage of cytochrome c oxidase synthesis, probably by being involved in the insertion of the copper B into subunit I. This Paracoccus denitrificans (strain Pd 1222) protein is Cytochrome c oxidase assembly protein CtaG.